The primary structure comprises 157 residues: Cyclic pyranopterin monophosphate synthase (157 aa).

Substrate-binding positions include 74 to 76 (MCH) and 112 to 113 (ME). Asp127 is a catalytic residue.

This sequence belongs to the MoaC family. Homohexamer; trimer of dimers.

The catalysed reaction is (8S)-3',8-cyclo-7,8-dihydroguanosine 5'-triphosphate = cyclic pyranopterin phosphate + diphosphate. Its pathway is cofactor biosynthesis; molybdopterin biosynthesis. Catalyzes the conversion of (8S)-3',8-cyclo-7,8-dihydroguanosine 5'-triphosphate to cyclic pyranopterin monophosphate (cPMP). This is Cyclic pyranopterin monophosphate synthase from Campylobacter jejuni subsp. jejuni serotype O:2 (strain ATCC 700819 / NCTC 11168).